A 76-amino-acid chain; its full sequence is UPF0346 protein OEOE_1017 (76 aa).

This sequence belongs to the UPF0346 family.

This chain is UPF0346 protein OEOE_1017, found in Oenococcus oeni (strain ATCC BAA-331 / PSU-1).